A 774-amino-acid chain; its full sequence is Phosphoribosylformylglycinamidine synthase subunit PurL (774 aa).

The active site involves H51. Positions 54 and 93 each coordinate ATP. Residue E95 participates in Mg(2+) binding. Substrate contacts are provided by residues 96-99 (SHNH) and R118. The active-site Proton acceptor is H97. A Mg(2+)-binding site is contributed by D119. Position 242 (Q242) interacts with substrate. D270 serves as a coordination point for Mg(2+). A substrate-binding site is contributed by 314–316 (ESQ). Residues D514 and G551 each coordinate ATP. A Mg(2+)-binding site is contributed by N552. Residue S554 participates in substrate binding.

This sequence belongs to the FGAMS family. Monomer. Part of the FGAM synthase complex composed of 1 PurL, 1 PurQ and 2 PurS subunits.

Its subcellular location is the cytoplasm. The catalysed reaction is N(2)-formyl-N(1)-(5-phospho-beta-D-ribosyl)glycinamide + L-glutamine + ATP + H2O = 2-formamido-N(1)-(5-O-phospho-beta-D-ribosyl)acetamidine + L-glutamate + ADP + phosphate + H(+). It participates in purine metabolism; IMP biosynthesis via de novo pathway; 5-amino-1-(5-phospho-D-ribosyl)imidazole from N(2)-formyl-N(1)-(5-phospho-D-ribosyl)glycinamide: step 1/2. Part of the phosphoribosylformylglycinamidine synthase complex involved in the purines biosynthetic pathway. Catalyzes the ATP-dependent conversion of formylglycinamide ribonucleotide (FGAR) and glutamine to yield formylglycinamidine ribonucleotide (FGAM) and glutamate. The FGAM synthase complex is composed of three subunits. PurQ produces an ammonia molecule by converting glutamine to glutamate. PurL transfers the ammonia molecule to FGAR to form FGAM in an ATP-dependent manner. PurS interacts with PurQ and PurL and is thought to assist in the transfer of the ammonia molecule from PurQ to PurL. The protein is Phosphoribosylformylglycinamidine synthase subunit PurL of Gloeobacter violaceus (strain ATCC 29082 / PCC 7421).